A 312-amino-acid chain; its full sequence is MTTKRKVAIVGSGNVGTDLMIKILRNAEHLEMAVMVGIDPASDGLARAGRMGVATTHEGVAGLVKMPEFADVDFVFDATSAGAHVKNDALLRATKPGIRVIDLTPAAIGPYCVPVVNLEQHVNAENLNMVTCGGQATIPMVAAVSRVAKVHYAEIVASIASKSAGPGTRANIDEFTETTSKAIEAIGGAAKGKAIIIMNPAEPPLMMRDTVYVLSEAADQDHVEASIEEMVAAVNAYVPGYRLKQKVQFEVIPDTAPLNIPGHGEFSGLKTSVFIEVEGAAHYLPAYAGNLDIMTSAALATAERMAQSMSQA.

Residue 12–15 (SGNV) coordinates NAD(+). Cys-132 functions as the Acyl-thioester intermediate in the catalytic mechanism. NAD(+) is bound by residues 163-171 (SAGPGTRAN) and Asn-290.

Belongs to the acetaldehyde dehydrogenase family.

It catalyses the reaction acetaldehyde + NAD(+) + CoA = acetyl-CoA + NADH + H(+). The sequence is that of Acetaldehyde dehydrogenase (cbzQ) from Pseudomonas putida (Arthrobacter siderocapsulatus).